Here is a 192-residue protein sequence, read N- to C-terminus: uncharacterized protein (192 aa).

This is an uncharacterized protein from Nostoc sp. (strain PCC 7120 / SAG 25.82 / UTEX 2576).